The primary structure comprises 314 residues: Olfactory receptor 5D13 (314 aa).

Over 1–27 the chain is Extracellular; it reads MMASERNQSSTPTFILLGFSEYPEIQV. Asn7 carries N-linked (GlcNAc...) asparagine glycosylation. The helical transmembrane segment at 28 to 48 threads the bilayer; that stretch reads PLFLVFLFVYTVTVVGNLGMI. The Cytoplasmic segment spans residues 49 to 56; sequence IIIRLNSK. A helical membrane pass occupies residues 57 to 77; it reads LHTIMCFFLSHLSLTDFCFST. Topologically, residues 78–101 are extracellular; that stretch reads VVTPKLLENLVVEYRTISFSGCIM. The chain crosses the membrane as a helical span at residues 102 to 122; sequence QFCFACIFGVTETFMLAAMAY. Topologically, residues 123-141 are cytoplasmic; sequence DRFVAVCKPLLYTTIMSQK. Residues 142 to 162 traverse the membrane as a helical segment; that stretch reads LCALLVAGSYTWGIVCSLILT. The Extracellular portion of the chain corresponds to 163-198; sequence YFLLDLSFCESTFINNFICDHSVIVSASYSDPYISQ. Residues 199–219 traverse the membrane as a helical segment; that stretch reads RLCFIIAIFNEVSSLIIILTS. At 220–239 the chain is on the cytoplasmic side; sequence YMLIFTTIMKMRSASGRQKT. Residues 240-260 form a helical membrane-spanning segment; the sequence is FSTCASHLTAITIFHGTILFL. Topologically, residues 261–273 are extracellular; that stretch reads YCVPNPKTSSLIV. A helical transmembrane segment spans residues 274–294; that stretch reads TVASVFYTVAIPMLNPLIYSL. Residues 295–314 are Cytoplasmic-facing; that stretch reads RNKDINNMFEKLVVTKLIYH.

The protein belongs to the G-protein coupled receptor 1 family.

It is found in the cell membrane. Odorant receptor. This Homo sapiens (Human) protein is Olfactory receptor 5D13 (OR5D13).